The primary structure comprises 251 residues: Imidazole glycerol phosphate synthase subunit HisF (251 aa).

Active-site residues include D13 and D132.

It belongs to the HisA/HisF family. In terms of assembly, heterodimer of HisH and HisF.

It is found in the cytoplasm. It catalyses the reaction 5-[(5-phospho-1-deoxy-D-ribulos-1-ylimino)methylamino]-1-(5-phospho-beta-D-ribosyl)imidazole-4-carboxamide + L-glutamine = D-erythro-1-(imidazol-4-yl)glycerol 3-phosphate + 5-amino-1-(5-phospho-beta-D-ribosyl)imidazole-4-carboxamide + L-glutamate + H(+). It participates in amino-acid biosynthesis; L-histidine biosynthesis; L-histidine from 5-phospho-alpha-D-ribose 1-diphosphate: step 5/9. Its function is as follows. IGPS catalyzes the conversion of PRFAR and glutamine to IGP, AICAR and glutamate. The HisF subunit catalyzes the cyclization activity that produces IGP and AICAR from PRFAR using the ammonia provided by the HisH subunit. The polypeptide is Imidazole glycerol phosphate synthase subunit HisF (Campylobacter concisus (strain 13826)).